The following is a 158-amino-acid chain: Osmosensory protein A (158 aa).

T2 carries the phosphothreonine; by PknD modification. The region spanning 28–139 (AQIRAYLHHL…RSVHKALHDL (112 aa)) is the STAS domain.

Belongs to the anti-sigma-factor antagonist family. Interacts with Rv2638. Phosphorylation abolishes binding to Rv2638. Post-translationally, phosphorylated on Thr-2 by the serine/threonine-protein kinase PknD. Also phosphorylated to a lesser extent by PknB and PknE. Dephosphorylated by PstP.

Its activity is regulated as follows. Regulated by PknD under osmotic stress. In terms of biological role, part of a signaling pathway that enables adaptation to osmotic stress through cell wall remodeling and virulence factor production. Unphosphorylated OprA forms a complex with the anti-anti-sigma-factor paralog Rv2638 that dissociates on OprA phosphorylation by PknD. Phosphorylation of OprA may stimulate the release of SigF from an inhibitory complex and enable the transcription of osmotically regulated genes, such as oprA and the ESX-1-associated virulence factor espA. This chain is Osmosensory protein A, found in Mycobacterium tuberculosis (strain ATCC 25618 / H37Rv).